We begin with the raw amino-acid sequence, 1161 residues long: DNA-directed RNA polymerase subunit beta (1161 aa).

The protein belongs to the RNA polymerase beta chain family. In terms of assembly, the RNAP catalytic core consists of 2 alpha, 1 beta, 1 beta' and 1 omega subunit. When a sigma factor is associated with the core the holoenzyme is formed, which can initiate transcription.

It carries out the reaction RNA(n) + a ribonucleoside 5'-triphosphate = RNA(n+1) + diphosphate. In terms of biological role, DNA-dependent RNA polymerase catalyzes the transcription of DNA into RNA using the four ribonucleoside triphosphates as substrates. The protein is DNA-directed RNA polymerase subunit beta of Streptomyces avermitilis (strain ATCC 31267 / DSM 46492 / JCM 5070 / NBRC 14893 / NCIMB 12804 / NRRL 8165 / MA-4680).